The chain runs to 333 residues: DNA-directed RNA polymerase subunit alpha (333 aa).

The segment at 1-246 is alpha N-terminal domain (alpha-NTD); the sequence is MEKFIKINWT…AHLNIIGDVN (246 aa). The alpha C-terminal domain (alpha-CTD) stretch occupies residues 263-333; sequence HSKTQNILIQ…YNVFLDKGEE (71 aa).

This sequence belongs to the RNA polymerase alpha chain family. Homodimer. The RNAP catalytic core consists of 2 alpha, 1 beta, 1 beta' and 1 omega subunit. When a sigma factor is associated with the core the holoenzyme is formed, which can initiate transcription.

It carries out the reaction RNA(n) + a ribonucleoside 5'-triphosphate = RNA(n+1) + diphosphate. In terms of biological role, DNA-dependent RNA polymerase catalyzes the transcription of DNA into RNA using the four ribonucleoside triphosphates as substrates. The polypeptide is DNA-directed RNA polymerase subunit alpha (Mycoplasma mobile (strain ATCC 43663 / 163K / NCTC 11711) (Mesomycoplasma mobile)).